Here is a 471-residue protein sequence, read N- to C-terminus: Citrate synthase, mitochondrial (471 aa).

Catalysis depends on residues histidine 309, histidine 355, and aspartate 409.

Belongs to the citrate synthase family. Homodimer. Ubiquitous.

It is found in the mitochondrion matrix. The enzyme catalyses oxaloacetate + acetyl-CoA + H2O = citrate + CoA + H(+). It participates in carbohydrate metabolism; tricarboxylic acid cycle; isocitrate from oxaloacetate: step 1/2. The polypeptide is Citrate synthase, mitochondrial (Solanum tuberosum (Potato)).